The primary structure comprises 29 residues: Small ribosomal subunit protein uS7 (29 aa).

The interval 1–29 is disordered; sequence ELIGAANRDTKSFSINRKDAKERVAKAAR. A compositionally biased stretch (basic and acidic residues) spans 8-29; that stretch reads RDTKSFSINRKDAKERVAKAAR.

It belongs to the universal ribosomal protein uS7 family. Part of the 30S ribosomal subunit.

Functionally, one of the primary rRNA binding proteins, it binds directly to 16S rRNA where it nucleates assembly of the head domain of the 30S subunit. Is located at the subunit interface close to the decoding center. The polypeptide is Small ribosomal subunit protein uS7 (rps7) (Methanosarcina thermophila).